A 577-amino-acid chain; its full sequence is BICD family-like cargo adapter 1 (577 aa).

Positions 63–100 (LLAAGERSSEPGEHPQAEPESPVEGHGPPLPPPPTQDP) are disordered. Residues 69 to 79 (RSSEPGEHPQA) are compositionally biased toward basic and acidic residues. The CC1 box signature appears at 116-120 (AARLG). A coiled-coil region spans residues 121–379 (KALLERNQDM…QLWEAYCQVR (259 aa)). The disordered stretch occupies residues 389–415 (DSADSAVSTDSSMDESSETSSAKDVPA). Positions 390 to 399 (SADSAVSTDS) are enriched in low complexity. Residues 443-528 (LSVEMTALKE…LEAWQDDMHR (86 aa)) are a coiled coil.

This sequence belongs to the BICDR family. Part of a tripartite complex with dynein and dynactin, acts an adapter linking the dynein motor complex and dynactin. Interacts with KIF1C. Interacts with RAB6A and RAB6B; interaction is specific to Rab6. Highly expressed during early embryonic development. Predominantly expressed in kidney, undifferentiated neural tissue and developing eye.

The protein resides in the cytoplasm. Its subcellular location is the cytoskeleton. It is found in the microtubule organizing center. It localises to the centrosome. Functionally, acts as an adapter protein linking the dynein motor complex to various cargos and converts dynein from a non-processive to a highly processive motor in the presence of dynactin. Facilitates the interaction between dynein and dynactin and activates dynein processivity (the ability to move along a microtubule for a long distance without falling off the track). Predominantly recruits 2 dyneins, which increases both the force and speed of the microtubule motor. Component of secretory vesicle machinery in developing neurons that acts as a regulator of neurite outgrowth. Regulates the secretory vesicle transport by controlling the accumulation of Rab6-containing secretory vesicles in the pericentrosomal region restricting anterograde secretory transport during the early phase of neuronal differentiation, thereby inhibiting neuritogenesis. This is BICD family-like cargo adapter 1 (Bicdl1) from Mus musculus (Mouse).